We begin with the raw amino-acid sequence, 328 residues long: Phosphate acyltransferase (328 aa).

It belongs to the PlsX family. In terms of assembly, homodimer. Probably interacts with PlsY.

It localises to the cytoplasm. It catalyses the reaction a fatty acyl-[ACP] + phosphate = an acyl phosphate + holo-[ACP]. It participates in lipid metabolism; phospholipid metabolism. Its function is as follows. Catalyzes the reversible formation of acyl-phosphate (acyl-PO(4)) from acyl-[acyl-carrier-protein] (acyl-ACP). This enzyme utilizes acyl-ACP as fatty acyl donor, but not acyl-CoA. The chain is Phosphate acyltransferase from Campylobacter jejuni subsp. doylei (strain ATCC BAA-1458 / RM4099 / 269.97).